A 308-amino-acid chain; its full sequence is ADP-L-glycero-D-manno-heptose-6-epimerase (308 aa).

NADP(+)-binding positions include 10 to 11 (MI), 31 to 32 (DN), K38, K53, 75 to 79 (EGACS), and N92. Y140 serves as the catalytic Proton acceptor. An NADP(+)-binding site is contributed by K144. N169 serves as a coordination point for substrate. Residues V170 and K178 each contribute to the NADP(+) site. K178 (proton acceptor) is an active-site residue. Substrate-binding positions include S180, H187, 201 to 204 (FEGS), R209, and Y272.

This sequence belongs to the NAD(P)-dependent epimerase/dehydratase family. HldD subfamily. Homopentamer. NADP(+) serves as cofactor.

The enzyme catalyses ADP-D-glycero-beta-D-manno-heptose = ADP-L-glycero-beta-D-manno-heptose. It participates in nucleotide-sugar biosynthesis; ADP-L-glycero-beta-D-manno-heptose biosynthesis; ADP-L-glycero-beta-D-manno-heptose from D-glycero-beta-D-manno-heptose 7-phosphate: step 4/4. Catalyzes the interconversion between ADP-D-glycero-beta-D-manno-heptose and ADP-L-glycero-beta-D-manno-heptose via an epimerization at carbon 6 of the heptose. The sequence is that of ADP-L-glycero-D-manno-heptose-6-epimerase from Actinobacillus pleuropneumoniae serotype 7 (strain AP76).